Consider the following 176-residue polypeptide: Sperm-egg fusion protein TMEM95 (176 aa).

Positions 1-16 (MWRLALGGVFLAAAQA) are cleaved as a signal peptide. 4 cysteine pairs are disulfide-bonded: cysteine 17/cysteine 118, cysteine 20/cysteine 121, cysteine 105/cysteine 128, and cysteine 109/cysteine 134. At 17–145 (CVFCRLPAHD…PGSQDLWEAK (129 aa)) the chain is on the extracellular side. The chain crosses the membrane as a helical span at residues 146 to 166 (ILLLSIFGAFLLLGVLSLLVE). Residues 167 to 176 (SHHLQAKSGL) lie on the Cytoplasmic side of the membrane.

It belongs to the TMEM95 family. As to quaternary structure, does not interact with sperm-egg fusion proteins IZUMO1 or IZUMO1R/JUNO. N-glycosylated. In terms of tissue distribution, spermatozoa (at protein level).

It is found in the cytoplasmic vesicle. The protein resides in the secretory vesicle. It localises to the acrosome membrane. Functionally, sperm protein required for fusion of sperm with the egg membrane during fertilization. This chain is Sperm-egg fusion protein TMEM95, found in Homo sapiens (Human).